The following is a 208-amino-acid chain: Uridine kinase (208 aa).

G11 to S18 contributes to the ATP binding site.

This sequence belongs to the uridine kinase family.

The protein resides in the cytoplasm. The catalysed reaction is uridine + ATP = UMP + ADP + H(+). The enzyme catalyses cytidine + ATP = CMP + ADP + H(+). Its pathway is pyrimidine metabolism; CTP biosynthesis via salvage pathway; CTP from cytidine: step 1/3. The protein operates within pyrimidine metabolism; UMP biosynthesis via salvage pathway; UMP from uridine: step 1/1. The sequence is that of Uridine kinase from Clostridium perfringens (strain SM101 / Type A).